We begin with the raw amino-acid sequence, 100 residues long: NADH-ubiquinone oxidoreductase chain 4L (100 aa).

Helical transmembrane passes span 3-23 (LVKY…GIFL), 28-48 (ILIM…NFLV), and 62-82 (ALFV…ILVI).

The protein belongs to the complex I subunit 4L family. In terms of assembly, complex I is composed of about 45 different subunits.

The protein localises to the mitochondrion membrane. It carries out the reaction a ubiquinone + NADH + 5 H(+)(in) = a ubiquinol + NAD(+) + 4 H(+)(out). In terms of biological role, core subunit of the mitochondrial membrane respiratory chain NADH dehydrogenase (Complex I) that is believed to belong to the minimal assembly required for catalysis. Complex I functions in the transfer of electrons from NADH to the respiratory chain. The immediate electron acceptor for the enzyme is believed to be ubiquinone. The polypeptide is NADH-ubiquinone oxidoreductase chain 4L (ND4L) (Marchantia polymorpha (Common liverwort)).